A 364-amino-acid chain; its full sequence is Rhomboid domain-containing protein 2 (364 aa).

5 consecutive transmembrane segments (helical) span residues 11–31, 63–83, 100–120, 158–178, and 184–204; these read WCLC…SLLV, LVTY…AIII, CFFT…FEAV, FGMV…SWLI, and LSNV…CYSI. Disordered stretches follow at residues 242–282 and 317–364; these read AQSR…KLAS and SSVY…VPMP. Polar residues-rich tracts occupy residues 267-276 and 317-329; these read HPVSQTQHAS and SSVY…TSLG.

The protein belongs to the peptidase S54 family.

The protein localises to the golgi apparatus. It localises to the cis-Golgi network membrane. The chain is Rhomboid domain-containing protein 2 (RHBDD2) from Homo sapiens (Human).